The primary structure comprises 325 residues: Chain length determinant protein (325 aa).

At 1–31 the chain is on the cytoplasmic side; the sequence is MRVENNNVSGQNLDPEQIDLIDLLVQLWRGK. The helical transmembrane segment at 32–52 threads the bilayer; it reads MTIIISVIVAIVLAIGYLVVA. At 53-294 the chain is on the periplasmic side; that stretch reads KEKWTSTAIV…LPIRRDSPKK (242 aa). The helical transmembrane segment at 295 to 315 threads the bilayer; it reads AITLILAVLLGGMVGAGIVLG. The Cytoplasmic segment spans residues 316 to 325; that stretch reads RNALRNYNAK.

Belongs to the WzzB/Cld/Rol family.

The protein resides in the cell inner membrane. It functions in the pathway bacterial outer membrane biogenesis; lipopolysaccharide biosynthesis. In terms of biological role, confers a modal distribution of chain length on the O-antigen component of lipopolysaccharide (LPS). Gives rise to a reduced number of short chain molecules and increases in numbers of longer molecules, with a modal value of 13 (in strain O111/M92) and of 17 (in strain K12). This is Chain length determinant protein (wzzB) from Escherichia coli.